Here is a 307-residue protein sequence, read N- to C-terminus: MEFVFLGTGAGVPSKGRNVSAIALQLLEERGQTWLFDCGEATQHQILHTSVRPRRIEKIFITHLHGDHIFGLPGLLGSRSFQGGTTPLTVYGPKGIKQFIEVALSVSTTHVKYPLEIVEITEEGTVFEDNEFHVETKRLSHGIECFGYRIIEKDIQGALLVDKLLEMGVKPGPLFKRLKDGEVVELENGTILNGNDFIGPPQKGRVITILGDTRYCEASRELAQDADVLVHEATFAAEDEQQAYDYFHSTSKQAASIALQANAKRLILTHISSRYQGDTYKELLKEARELFSNTEIATDLKSFPVDR.

Positions 63, 65, 67, 68, 141, 212, and 270 each coordinate Zn(2+). The active-site Proton acceptor is the aspartate 67.

The protein belongs to the RNase Z family. In terms of assembly, homodimer. The cofactor is Zn(2+).

The enzyme catalyses Endonucleolytic cleavage of RNA, removing extra 3' nucleotides from tRNA precursor, generating 3' termini of tRNAs. A 3'-hydroxy group is left at the tRNA terminus and a 5'-phosphoryl group is left at the trailer molecule.. In terms of biological role, zinc phosphodiesterase, which displays some tRNA 3'-processing endonuclease activity. Probably involved in tRNA maturation, by removing a 3'-trailer from precursor tRNA. This chain is Ribonuclease Z, found in Bacillus thuringiensis subsp. konkukian (strain 97-27).